The primary structure comprises 424 residues: Proline--tRNA ligase (424 aa).

Belongs to the class-II aminoacyl-tRNA synthetase family. ProS type 2 subfamily. As to quaternary structure, homodimer.

It is found in the cytoplasm. It carries out the reaction tRNA(Pro) + L-proline + ATP = L-prolyl-tRNA(Pro) + AMP + diphosphate. Functionally, catalyzes the attachment of proline to tRNA(Pro) in a two-step reaction: proline is first activated by ATP to form Pro-AMP and then transferred to the acceptor end of tRNA(Pro). The protein is Proline--tRNA ligase of Ehrlichia chaffeensis (strain ATCC CRL-10679 / Arkansas).